A 230-amino-acid chain; its full sequence is MAHFTLYSHAGGPNPWKVVLALKELNLSYEQIFYDFQKGEQKCKEHLALNPNGRVPTLVDHKNNDYTIWESDAILIYLADKYDTDRKISLSFDDPEYYKLIQYLFFQASGQGVIWGQAGWFNFFHHEPVVSAVTRYRNEIKRVLGVLEDILKDRDYLVANKYTIADLSFIPWNYNLGGLFGEGKFSFKEEVPQLDFEKEFPKAYAWNQRLLARPAVKATFEELAKAKEQH.

The GST N-terminal domain occupies 2-86 (AHFTLYSHAG…YLADKYDTDR (85 aa)). Residues 93 to 230 (DDPEYYKLIQ…EELAKAKEQH (138 aa)) form the GST C-terminal domain.

It belongs to the GST superfamily.

The enzyme catalyses RX + glutathione = an S-substituted glutathione + a halide anion + H(+). Its function is as follows. Involved in the oxidative stress response and detoxification. The sequence is that of Glutathione S-transferase 2 (gst2) from Schizosaccharomyces pombe (strain 972 / ATCC 24843) (Fission yeast).